The sequence spans 206 residues: Oligoribonuclease (206 aa).

The 164-residue stretch at 20–183 (LVWLDMEMTG…ADIHESIDEL (164 aa)) folds into the Exonuclease domain. Residue Tyr-141 is part of the active site.

Belongs to the oligoribonuclease family.

It localises to the cytoplasm. Its function is as follows. 3'-to-5' exoribonuclease specific for small oligoribonucleotides. The sequence is that of Oligoribonuclease from Burkholderia cenocepacia (strain HI2424).